The primary structure comprises 535 residues: Ankyrin repeat domain-containing protein 34C (535 aa).

ANK repeat units follow at residues 10-39 (TDGN…YINE), 43-80 (KGET…DPNI), 84-114 (SGKT…DPSL), and 118-147 (TGAS…AKGK). Disordered regions lie at residues 159-181 (SGTK…DRHS) and 214-237 (AGHP…RKVS). Residues 216-225 (HPSSCNTSKA) are compositionally biased toward polar residues. Ser-301 is subject to Phosphoserine. The disordered stretch occupies residues 381-444 (DLDIQPGPDP…RRRPPHLLER (64 aa)). Position 447 is a phosphoserine (Ser-447).

It belongs to the ANKRD34 family.

In Homo sapiens (Human), this protein is Ankyrin repeat domain-containing protein 34C (ANKRD34C).